Here is a 277-residue protein sequence, read N- to C-terminus: NLP effector protein Pc109095 (277 aa).

The signal sequence occupies residues 1–19 (MKFIFAFVLCLAVAQTALG). The short motif at 119 to 125 (RSRHLWA) is the Hepta-peptide GHRHDWE motif element. Asn199 is a glycosylation site (N-linked (GlcNAc...) asparagine).

The protein belongs to the Necrosis inducing protein (NPP1) family.

It is found in the secreted. Functionally, secreted effector that contributes strongly to virulence during infection by P.capsici. The chain is NLP effector protein Pc109095 from Phytophthora capsici.